The sequence spans 336 residues: UPF0324 membrane protein SP_0034 (336 aa).

8 consecutive transmembrane segments (helical) span residues 65–84 (LLQYAVVLLGFGLNISQVFA), 91–113 (PVILSTISIALIIAYLFQRFFAL), 118–140 (ATLVGVGSSICGGSAIAATAPVI), 153–175 (VIFFFNVLAALIFPTLGTWLHLS), 211–233 (SATIVKLTRTLAIIPITLFLSYW), 249–271 (VFPLFILYFILASLLTTLLTSLG), 286–305 (FLIVMAMSAIGLKTNLVAMV), and 312–334 (ILLGAICWIAIILTTLGMQTLIG).

It belongs to the UPF0324 family.

Its subcellular location is the cell membrane. This is UPF0324 membrane protein SP_0034 from Streptococcus pneumoniae serotype 4 (strain ATCC BAA-334 / TIGR4).